The primary structure comprises 834 residues: Leucine--tRNA ligase (834 aa).

The 'HIGH' region motif lies at 40–50 (PYPSGNIHMGH). The short motif at 586–590 (KMSKS) is the 'KMSKS' region element. Lys589 lines the ATP pocket.

This sequence belongs to the class-I aminoacyl-tRNA synthetase family.

It is found in the cytoplasm. It carries out the reaction tRNA(Leu) + L-leucine + ATP = L-leucyl-tRNA(Leu) + AMP + diphosphate. The polypeptide is Leucine--tRNA ligase (Nitratidesulfovibrio vulgaris (strain DSM 19637 / Miyazaki F) (Desulfovibrio vulgaris)).